The sequence spans 443 residues: Probable lysophospholipase BODYGUARD 5 (443 aa).

An N-terminal signal peptide occupies residues 1 to 52 (MITSSFSEKCTSVINGAPSWAVFFLFDLLDYFLCIVFRFLDEVMEEKSESCH). Cys-53 carries the N-palmitoyl cysteine lipid modification. In terms of domain architecture, AB hydrolase-1 spans 163–268 (VIFVHGFLAS…VKSVALVAPP (106 aa)). His-167 is a catalytic residue. Ser-242 serves as the catalytic Nucleophile. Active-site charge relay system residues include Asp-387 and His-415.

It is found in the cell membrane. It localises to the secreted. Its subcellular location is the cell wall. Functionally, involved in cuticle development and morphogenesis. This chain is Probable lysophospholipase BODYGUARD 5, found in Arabidopsis thaliana (Mouse-ear cress).